Consider the following 65-residue polypeptide: Large ribosomal subunit protein bL35 (65 aa).

The interval 1–26 (MPKIKTLRSAAKRFKKTESGKFKRKQ) is disordered.

Belongs to the bacterial ribosomal protein bL35 family.

The protein is Large ribosomal subunit protein bL35 of Buchnera aphidicola subsp. Baizongia pistaciae (strain Bp).